Reading from the N-terminus, the 529-residue chain is MSVKWTSVILLIQLSFYFSSGSCGKVLVWAAEYSHWMNMKTILEELVQRGHEVTVLASSASILFDPNNSSALKIEVFPTSLTKTEFENISMQEVKRWIELPKDTFWLYFSQMQEIMWRFGDIIRNFCKDVVSNKKLMKKLQESRFDVVFADPIFPCSELLAELFNIPLVYSLRFTPGYIFEKHCGGFLFPPSYVPVVMSELSDQMTFMERVKNMIYMLSFDFYFQMYDMKKWDQFYSEVLGRPTTLSETMGKADIWLIRNSWNFQFPHPLLPNVDFVGGLHCKPAKPLPKEMEEFVQSSGENGVVVFSLGSMVTNMEEERANVIASALAQIPQKVLWRFDGKKPDTLGLNTRLYKWIPQNDLLGHPKTRAFITHGGANGIYEAIYHGVPMVGIPLFADQPDNIAHMKTKGAAVRLDFDTMSSTDLANRLKTVINDPLYKENVMKLSRIQHDQPVKPLDRAVFWIEFVMRHKGAKHLRPAAHDLTWFQYHSLDVIGFLLACVATVIFVIMKCCLFCFWKFARKGKKGKSD.

The first 21 residues, 1 to 21 (MSVKWTSVILLIQLSFYFSSG), serve as a signal peptide directing secretion. 3 N-linked (GlcNAc...) asparagine glycosylation sites follow: Asn67, Asn68, and Asn88. The helical transmembrane segment at 494-514 (IGFLLACVATVIFVIMKCCLF) threads the bilayer.

This sequence belongs to the UDP-glycosyltransferase family.

Its subcellular location is the microsome membrane. It localises to the endoplasmic reticulum membrane. It carries out the reaction glucuronate acceptor + UDP-alpha-D-glucuronate = acceptor beta-D-glucuronoside + UDP + H(+). Functionally, UDPGT is of major importance in the conjugation and subsequent elimination of potentially toxic xenobiotics and endogenous compounds. This isozyme is active on C18, C19, and C21 steroids, bile acids, and several xenobiotics including eugenol, 1-naphthol, and p-nitrophenol. This Macaca fascicularis (Crab-eating macaque) protein is UDP-glucuronosyltransferase 2B9 (UGT2B9).